Here is a 312-residue protein sequence, read N- to C-terminus: Malate dehydrogenase (312 aa).

NAD(+) is bound by residues 12-17 (GAGFTG) and D36. R87 and R93 together coordinate substrate. NAD(+)-binding positions include N100 and 123–125 (LTN). N125 is a binding site for substrate. The residue at position 149 (S149) is a Phosphoserine. R156 provides a ligand contact to substrate. H180 (proton acceptor) is an active-site residue.

It belongs to the LDH/MDH superfamily. MDH type 3 family.

It catalyses the reaction (S)-malate + NAD(+) = oxaloacetate + NADH + H(+). Its function is as follows. Catalyzes the reversible oxidation of malate to oxaloacetate. This chain is Malate dehydrogenase, found in Anoxybacillus flavithermus (strain DSM 21510 / WK1).